The following is a 505-amino-acid chain: Lysine--tRNA ligase (505 aa).

The segment covering 1–11 (MSDQQLDQPSL) has biased composition (polar residues). The interval 1–23 (MSDQQLDQPSLSHEERQHEENKL) is disordered. Residues 12–23 (SHEERQHEENKL) show a composition bias toward basic and acidic residues. Mg(2+)-binding residues include Glu-415 and Glu-422.

The protein belongs to the class-II aminoacyl-tRNA synthetase family. As to quaternary structure, homodimer. The cofactor is Mg(2+).

Its subcellular location is the cytoplasm. The enzyme catalyses tRNA(Lys) + L-lysine + ATP = L-lysyl-tRNA(Lys) + AMP + diphosphate. This chain is Lysine--tRNA ligase, found in Ectopseudomonas mendocina (strain ymp) (Pseudomonas mendocina).